A 211-amino-acid polypeptide reads, in one-letter code: N,O-diacetylmuramidase (211 aa).

Residues Asp-6 and Glu-100 contribute to the active site. The cysteines at positions 108 and 147 are disulfide-linked.

The protein belongs to the glycosyl hydrolase 25 family.

It is found in the secreted. The protein resides in the extracellular space. The catalysed reaction is Hydrolysis of (1-&gt;4)-beta-linkages between N-acetylmuramic acid and N-acetyl-D-glucosamine residues in a peptidoglycan and between N-acetyl-D-glucosamine residues in chitodextrins.. This enzyme has both lysozyme (acetylmuramidase) and diacetylmuramidase activities. The sequence is that of N,O-diacetylmuramidase from Chalaropsis sp.